A 2038-amino-acid polypeptide reads, in one-letter code: Non-reducing polyketide synthase ZEA1 (2038 aa).

The tract at residues 9 to 246 is N-terminal acylcarrier protein transacylase domain (SAT); the sequence is LLFGDQTDSW…NELNIHALQH (238 aa). A Ketosynthase family 3 (KS3) domain is found at 364–794; the sequence is PGRIAIVGMA…GGNACILLED (431 aa). Active-site for beta-ketoacyl synthase activity residues include C537, H672, and H711. The segment at 888-1172 is malonyl-CoA:ACP transacylase (MAT) domain; it reads VFVFTGQGSH…VCSSFVRATL (285 aa). Catalysis depends on S979, which acts as the For acyl/malonyl transferase activity. The product template (PT) domain stretch occupies residues 1221–1572; that stretch reads SLLNLPTYAW…HFHEVENAVL (352 aa). The segment at 1254–1405 is N-terminal hotdog fold; the sequence is HETFKANIST…GQLIQARWDK (152 aa). In terms of domain architecture, PKS/mFAS DH spans 1254-1573; the sequence is HETFKANIST…FHEVENAVLD (320 aa). Positions 1425 to 1573 are C-terminal hotdog fold; the sequence is ISHRLQPQIL…FHEVENAVLD (149 aa). In terms of domain architecture, Carrier spans 1616–1693; sequence QSDAHVLDSI…DLRRVFAPKS (78 aa). S1653 is modified (O-(pantetheine 4'-phosphoryl)serine). The disordered stretch occupies residues 1700–1738; sequence NDLSRPSLVDDTSQALQSSGSESFDQPPTSVTSTSDSGS. The segment covering 1709–1737 has biased composition (polar residues); the sequence is DDTSQALQSSGSESFDQPPTSVTSTSDSG. A thioesterase (TE) domain region spans residues 1778–1882; sequence TGTIATYIHL…PRSKTVEDKN (105 aa). The active-site For thioesterase activity is the H2021.

It participates in mycotoxin biosynthesis. Its function is as follows. Non-reducing polyketide synthase; part of the gene cluster that mediates the biosynthesis of zearalenone (ZEA), a nonsteroid estrogen that is a contaminant of cereal grains and causes estrogenic disorders in humans and animals. The ZEA backbone is synthesized from a single acetyl-CoA molecule and eight malonyl-CoA molecules. The reducing polyketide synthase ZEA2 is proposed to synthesize a reduced hexaketide intermediate by using different combinations of its reductive domains during each round of condensation. The hexaketide thioester is then transacylated to the non-reducing polyketide synthase ZEA1 and is further condensed with three malonyl-CoAs without reductive tailoring to yield a mixed reduced/unreduced nonaketide. ZEA1 must be able to interact with ZEA2 to facilitate starter-unit acyltransfer and initiate polyketide biosynthesis. ZEA1 also mediates the required C2-C7 cyclization to form the resorcylate core and catalyzes the formation of the macrolactone. ZEA1 exhibits broad starter-unit specificities toward fatty acyl-CoAs ranging in sizes between C6 and C16 and displays the highest activity toward decanoyl-CoA. ZEB1 is then responsible for the chemical conversion of beta-zearalenonol (beta-ZOL) to ZEA in the biosynthetic pathway. This is Non-reducing polyketide synthase ZEA1 from Gibberella zeae (strain ATCC MYA-4620 / CBS 123657 / FGSC 9075 / NRRL 31084 / PH-1) (Wheat head blight fungus).